Reading from the N-terminus, the 336-residue chain is MIVLGIESSCDETGLAIYDYSKKKLIADELYSQVKLHKKYGGVVPELASREHIAKLNLLAKKIFKETGLSFEDIDCIAYTAMPGLVGALMVGATFAKTLGLIHNIDTIAVHHLEGHLLSPLLDHNSNIEYPFVALLVSGGHTQLFEVKEFGEYSLLGESIDDAAGEAFDKTTKLLGMGYPGGVEVANLADQATDKSKYILPRPMKNKPNLDFSFSGLKTAVLNTWYDEQDQSLENKANLCYAFQNAAIDVLVSKCAKALQKTKNTRLVISGGVSANKLLRHQLDLLAKNREYQIFFPPMKYCTDNGAMIALAGAYRYVNGFKDSNLEINVKARSPL.

2 residues coordinate Fe cation: histidine 112 and histidine 116. Substrate contacts are provided by residues leucine 136–glycine 140, aspartate 169, glycine 182, and asparagine 276. Aspartate 304 lines the Fe cation pocket.

The protein belongs to the KAE1 / TsaD family. The cofactor is Fe(2+).

Its subcellular location is the cytoplasm. The enzyme catalyses L-threonylcarbamoyladenylate + adenosine(37) in tRNA = N(6)-L-threonylcarbamoyladenosine(37) in tRNA + AMP + H(+). Functionally, required for the formation of a threonylcarbamoyl group on adenosine at position 37 (t(6)A37) in tRNAs that read codons beginning with adenine. Is involved in the transfer of the threonylcarbamoyl moiety of threonylcarbamoyl-AMP (TC-AMP) to the N6 group of A37, together with TsaE and TsaB. TsaD likely plays a direct catalytic role in this reaction. This chain is tRNA N6-adenosine threonylcarbamoyltransferase, found in Francisella tularensis subsp. holarctica (strain LVS).